A 136-amino-acid polypeptide reads, in one-letter code: MLSNPQRTRFRKQHRGRMKGISYRGNHICFGRYALQALEPAWITSRQIEAGRRAMSRNVRRGGQIWVRIFPDKPVTVRPTETRMGSGKGFPEYWVAVVKPGKILYEMGGVPENIARKAISIASSKMPIRTQFIISG.

The protein belongs to the universal ribosomal protein uL16 family. In terms of assembly, part of the 50S ribosomal subunit.

The protein localises to the plastid. It localises to the chloroplast. The sequence is that of Large ribosomal subunit protein uL16c from Phaseolus angularis (Azuki bean).